Here is a 747-residue protein sequence, read N- to C-terminus: H(+)/Cl(-) exchange transporter 4 (747 aa).

The tract at residues 1-50 is required for localization in the endoplasmic reticulum; that stretch reads MDFLDEPFPDVGTYEDFHTIDWLREKSRDTDRHRKITSKSKESIWEFIKS. Residues 1-54 are Cytoplasmic-facing; it reads MDFLDEPFPDVGTYEDFHTIDWLREKSRDTDRHRKITSKSKESIWEFIKSLLDA. Transmembrane regions (helical) follow at residues 55–92 and 138–161; these read WSGW…VCLS and LNYL…VRVF. The Selectivity filter part_1 motif lies at 167–171; sequence GSGIP. Position 168 (Ser-168) interacts with chloride. The segment at residues 170–177 is an intramembrane region (helical); the sequence is IPEIKTIL. The next 2 helical transmembrane spans lie at 187–205 and 211–230; these read GKWT…VSSG and EGPL…SLFS. The short motif at 209-213 is the Selectivity filter part_2 element; that stretch reads GKEGP. 2 consecutive intramembrane regions (helical) follow at residues 242–254 and 258–266; these read VLSA…VSVA and PIGGVLFSL. Helical transmembrane passes span 278-296, 320-345, 352-372, 429-449, and 454-473; these read LWRS…RSIN, FPFI…AWCR, LGKY…IIAY, MWQL…TFGM, and GLFI…VGIG. The short motif at 454-458 is the Selectivity filter part_3 element; that stretch reads GLFIP. Residue Phe-456 participates in chloride binding. Intramembrane regions (helical) lie at residues 501–515 and 519–530; these read GLYA…LGGV and TVSLVVIMFELT. The segment at residues 531-534 is an intramembrane region (note=Loop between two helices); sequence GGLE. A helical membrane pass occupies residues 535–553; that stretch reads YIVPLMAAAVTSKWVADAF. Residues 554–747 lie on the Cytoplasmic side of the membrane; sequence GKEGIYEAHI…NQDPESIIFN (194 aa). Tyr-559 is a binding site for chloride. Residues 587–653 form the CBS 1 domain; it reads MRPRRGEPPL…AIKNARQRQE (67 aa). ATP contacts are provided by residues Ser-597 and 618–620; that span reads YNG. The interval 654 to 683 is required for localization in the endoplasmic reticulum; it reads GIVSNSIMYFTEEPPELPANSPHPLKLRRI. The CBS 2 domain maps to 684–742; sequence LNLSPFTVTDHTPMETVVDIFRKLGLRQCLVTRSGRLLGIITKKDVLRHMAQMANQDPE. 725–728 lines the ATP pocket; the sequence is TKKD.

This sequence belongs to the chloride channel (TC 2.A.49) family. ClC-4/CLCN4 subfamily. In terms of tissue distribution, strongly expressed in liver and brain, but also in heart, muscle, kidney and spleen.

It localises to the early endosome membrane. It is found in the late endosome membrane. Its subcellular location is the endoplasmic reticulum membrane. The protein resides in the lysosome membrane. The protein localises to the recycling endosome membrane. In terms of biological role, strongly outwardly rectifying, electrogenic H(+)/Cl(-)exchanger which mediates the exchange of chloride ions against protons. The CLC channel family contains both chloride channels and proton-coupled anion transporters that exchange chloride or another anion for protons. The presence of conserved gating glutamate residues is typical for family members that function as antiporters. The sequence is that of H(+)/Cl(-) exchange transporter 4 (Clcn4) from Rattus norvegicus (Rat).